A 538-amino-acid chain; its full sequence is indole-2-monooxygenase (538 aa).

Residues 22-42 (ALLLAIPFSLLLLPLLLRYLA) traverse the membrane as a helical segment. A heme-binding site is contributed by Cys-481.

This sequence belongs to the cytochrome P450 family. It depends on heme as a cofactor.

It localises to the membrane. The catalysed reaction is indole + reduced [NADPH--hemoprotein reductase] + O2 = indolin-2-one + oxidized [NADPH--hemoprotein reductase] + H2O + H(+). The protein operates within secondary metabolite biosynthesis; 2,4-dihydroxy-1,4-benzoxazin-3-one biosynthesis; 2,4-dihydroxy-1,4-benzoxazin-3-one from indoleglycerol phosphate: step 2/5. In terms of biological role, catalyzes the conversion of indole to indolin-2-one. This is indole-2-monooxygenase (CYP71C4) from Zea mays (Maize).